The sequence spans 339 residues: MTLHVQSAVSLRPFNTFGVDVQARLFAQARNDDEVREALAYSAEHDVPLLVIGGGSNLLLSGDVQALVLRMASRGIRIVREDCLEAIVEAEAGEPWHPFVQSCLELGLAGLENLSLIPGTVGAAPMQNIGAYGVEIKDVFHGLTALDRETGELREFALQDCAFGYRDSVFKHQPGRWLILRVRFKLSREANLHLEYGPVRQRLDQLGIDKPTPFDVSRAICAIRSEKLPDPAVLGNAGSFFKNPLVAAELYATIKSQHPGVVGYPQADGQVKLAAGWLIEQAGWKGYRDGDAGVHKLQSLVLVNYGHASGLQLLNLARRIQADIVERFGVELEMEPNLY.

The FAD-binding PCMH-type domain occupies 19–189 (VDVQARLFAQ…LRVRFKLSRE (171 aa)). The active site involves Arg-166. The Proton donor role is filled by Ser-239. The active site involves Glu-335.

The protein belongs to the MurB family. The cofactor is FAD.

It localises to the cytoplasm. The enzyme catalyses UDP-N-acetyl-alpha-D-muramate + NADP(+) = UDP-N-acetyl-3-O-(1-carboxyvinyl)-alpha-D-glucosamine + NADPH + H(+). The protein operates within cell wall biogenesis; peptidoglycan biosynthesis. Functionally, cell wall formation. In Pseudomonas syringae pv. tomato (strain ATCC BAA-871 / DC3000), this protein is UDP-N-acetylenolpyruvoylglucosamine reductase.